Consider the following 492-residue polypeptide: N-succinylglutamate 5-semialdehyde dehydrogenase (492 aa).

220 to 225 (GSASTG) lines the NAD(+) pocket. Residues glutamate 243 and cysteine 277 contribute to the active site.

Belongs to the aldehyde dehydrogenase family. AstD subfamily.

The catalysed reaction is N-succinyl-L-glutamate 5-semialdehyde + NAD(+) + H2O = N-succinyl-L-glutamate + NADH + 2 H(+). It participates in amino-acid degradation; L-arginine degradation via AST pathway; L-glutamate and succinate from L-arginine: step 4/5. Catalyzes the NAD-dependent reduction of succinylglutamate semialdehyde into succinylglutamate. The sequence is that of N-succinylglutamate 5-semialdehyde dehydrogenase from Salmonella heidelberg (strain SL476).